The following is a 1188-amino-acid chain: Oxysterol-binding protein homolog 1 (1188 aa).

ANK repeat units follow at residues 51 to 80 (VLHLMLHYAVQVAPMAVIKEIVHHWVSTTN), 96 to 125 (NGNTPLHIAAYQSRGDIVAFLLDQPTINDC), and 196 to 225 (TGDTVLHEFVKKRDVIMCRWLLEHGADPFK). The region spanning 330–379 (MSSCSLHLDSSEKLKFEIIGGNNGVIRWHLKGNHPIETNRWVWAIQGAIR) is the PH domain. Ser394 is modified (phosphoserine). Disordered stretches follow at residues 415 to 546 (ATSK…GDED) and 661 to 692 (QKKLNNQPQVETEANEESDDANSMIKGSQEST). Positions 424 to 433 (PHLSKSTLTQ) are enriched in polar residues. The span at 443–462 (TNNNNNKSNNDYDDNNNNNN) shows a compositional bias: low complexity. Residues 463-473 (NDDDDYDDDDE) show a composition bias toward acidic residues. A phosphoserine mark is found at Ser490 and Ser500. The span at 514-529 (PSDDEGYSEDDSDDDG) shows a compositional bias: acidic residues. Ser678, Ser683, and Ser691 each carry phosphoserine. Phosphothreonine occurs at positions 692 and 694. Phosphoserine occurs at positions 708 and 712. Residues 716 to 722 (EFFDAEE) carry the FFAT motif. Residues 721-755 (EEAASDKKANDSEDLTTNKETPANAKPQEEAPEDE) are disordered. The interval 800–1174 (LWSVLKSMVG…YWKFNGEYWN (375 aa)) is OSBP-related domain (ORD). Positions 834 and 962 each coordinate ergosterol.

The protein belongs to the OSBP family. As to quaternary structure, interacts with NVJ1. Interacts with the AAA ATPase AFG2; regulates OSH1 membrane association. AFG2 is required for membrane dissociation of OSH1. Interacts with SCS2.

Its subcellular location is the golgi apparatus membrane. It localises to the nucleus outer membrane. The protein resides in the endoplasmic reticulum membrane. It is found in the vacuole membrane. Its function is as follows. Lipid transport protein (LTP) involved in non-vesicular transfer of lipids between membranes. Functions in phosphoinositide-coupled directional transport of various lipids by carrying the lipid molecule in a hydrophobic pocket and transferring it between membranes through the cytosol. Involved in maintenance of intracellular sterol distribution and homeostasis. Involved in non-vesicular transport of ergosterol and PI(4)P at the NVJ. Binds sterol and PI4P in a mutually exclusive manner. May be involved in formation of PMN vesicles by altering the membrane lipid composition. This is Oxysterol-binding protein homolog 1 from Saccharomyces cerevisiae (strain ATCC 204508 / S288c) (Baker's yeast).